The sequence spans 379 residues: Sulfate adenylyltransferase (379 aa).

Belongs to the sulfate adenylyltransferase family.

The catalysed reaction is sulfate + ATP + H(+) = adenosine 5'-phosphosulfate + diphosphate. Its pathway is sulfur metabolism; hydrogen sulfide biosynthesis; sulfite from sulfate: step 1/3. The protein is Sulfate adenylyltransferase (sat) of Pyrococcus abyssi (strain GE5 / Orsay).